The chain runs to 408 residues: Energy-coupling factor transporter ATP-binding protein EcfA1 (408 aa).

The ABC transporter domain maps to 140–374; it reads IEIKNLSFKY…KEFLRNIQLD (235 aa). 174–181 lines the ATP pocket; it reads GHNGSGKS.

The protein belongs to the ABC transporter superfamily. Energy-coupling factor EcfA family. Forms a stable energy-coupling factor (ECF) transporter complex composed of 2 membrane-embedded substrate-binding proteins (S component), 2 ATP-binding proteins (A component) and 2 transmembrane proteins (T component).

The protein localises to the cell membrane. Functionally, ATP-binding (A) component of a common energy-coupling factor (ECF) ABC-transporter complex. Unlike classic ABC transporters this ECF transporter provides the energy necessary to transport a number of different substrates. This Mycoplasma capricolum subsp. capricolum (strain California kid / ATCC 27343 / NCTC 10154) protein is Energy-coupling factor transporter ATP-binding protein EcfA1.